The chain runs to 720 residues: 1,4-alpha-glucan branching enzyme GlgB 2 (720 aa).

Residue D398 is the Nucleophile of the active site. The active-site Proton donor is the E451.

This sequence belongs to the glycosyl hydrolase 13 family. GlgB subfamily. In terms of assembly, monomer.

It carries out the reaction Transfers a segment of a (1-&gt;4)-alpha-D-glucan chain to a primary hydroxy group in a similar glucan chain.. Its pathway is glycan biosynthesis; glycogen biosynthesis. Functionally, catalyzes the formation of the alpha-1,6-glucosidic linkages in glycogen by scission of a 1,4-alpha-linked oligosaccharide from growing alpha-1,4-glucan chains and the subsequent attachment of the oligosaccharide to the alpha-1,6 position. The chain is 1,4-alpha-glucan branching enzyme GlgB 2 from Xanthomonas oryzae pv. oryzae (strain KACC10331 / KXO85).